The sequence spans 285 residues: tRNA (cytidine(32)/guanosine(34)-2'-O)-methyltransferase (285 aa).

S-adenosyl-L-methionine is bound by residues glycine 53, tryptophan 55, aspartate 83, aspartate 99, and aspartate 124. The Proton acceptor role is filled by lysine 164.

Belongs to the class I-like SAM-binding methyltransferase superfamily. RNA methyltransferase RlmE family. TRM7 subfamily.

The protein localises to the cytoplasm. It carries out the reaction cytidine(32)/guanosine(34) in tRNA + 2 S-adenosyl-L-methionine = 2'-O-methylcytidine(32)/2'-O-methylguanosine(34) in tRNA + 2 S-adenosyl-L-homocysteine + 2 H(+). Functionally, methylates the 2'-O-ribose of nucleotides at positions 32 and 34 of the tRNA anticodon loop of substrate tRNAs. Requires trm732 for methylation of the cytidine at position 32 of the anticodon loop of substrate tRNAs. Requires trm734 for methylation of the nucleotide at position 34 of the anticodon loop of substrate tRNAs. Methylates tRNA(Phe). The protein is tRNA (cytidine(32)/guanosine(34)-2'-O)-methyltransferase of Schizosaccharomyces pombe (strain 972 / ATCC 24843) (Fission yeast).